Reading from the N-terminus, the 860-residue chain is Mycobactin import ATP-binding/permease protein IrtA (860 aa).

Topologically, residues 1-293 (MARGIQGVMM…GRLLAPLKTT (293 aa)) are cytoplasmic. The FAD-binding FR-type domain maps to 15-124 (ARDHQATVVS…LGSAGFSVPE (110 aa)). FAD contacts are provided by residues 70–73 (RAYT), 87–91 (DVVLH), 97–98 (AS), and 238–240 (TEG). The disordered stretch occupies residues 242–275 (AMGTKRGDDDKTPEVNPAPRADKPEAPAPAAAGR). A helical transmembrane segment spans residues 294 to 314 (LIISGVLQAIITLVQLAPFVL). Positions 295–577 (IISGVLQAII…IAYGLGGIRG (283 aa)) constitute an ABC transmembrane type-1 domain. At 315 to 335 (LVELARLLLSGASSDRLWTLG) the chain is on the periplasmic side. The helical transmembrane segment at 336 to 356 (VVAISLLGTGSFLAAALTLWL) threads the bilayer. The Cytoplasmic segment spans residues 357-409 (HLVDARFARDLRTGLLTKMSRLPLGWFTARGSGSIKQLVQDDTLSLHYLITHA). Residues 410-430 (IPDAVAAVIAPVAVLVYLFVV) traverse the membrane as a helical segment. At 431–433 (DWR) the chain is on the periplasmic side. Residues 434–454 (LALVMFVPVLIYLVLMTVMTI) traverse the membrane as a helical segment. Residues 455–525 (QSGPKIAQSQ…KKSMMDLVTR (71 aa)) are Cytoplasmic-facing. Residues 526–546 (PGTFLWLIVAVGTPMITSGAM) traverse the membrane as a helical segment. At 547–550 (DPVD) the chain is on the periplasmic side. Residues 551-571 (ILPFLLLGTTFGVRLLGIAYG) traverse the membrane as a helical segment. The Cytoplasmic segment spans residues 572-860 (LGGIRGGMLA…AAGPTGEAVR (289 aa)). The ABC transporter domain maps to 609–842 (VVFDNVTFGY…AGRYRQLWET (234 aa)). 642 to 649 (GPSGSGKS) provides a ligand contact to ATP.

This sequence belongs to the ABC transporter superfamily. Siderophore-Fe(3+) uptake transporter (SIUT) (TC 3.A.1.21) family. As to quaternary structure, forms a heterodimer with IrtB. The cofactor is FAD.

Its subcellular location is the cell inner membrane. Part of the ABC transporter complex IrtAB involved in the import of iron-bound mycobactin (Fe-MBT) and carboxymycobactin (Fe-cMBT). Has a preference for Fe-MBT over Fe-cMBT. Mycobactins are then reduced by the siderophore interaction domain to facilitate iron release in the bacterial cell. Transmembrane domains (TMD) form a pore in the membrane and the ATP-binding domain (NBD) is responsible for energy generation. The chain is Mycobactin import ATP-binding/permease protein IrtA from Mycolicibacterium smegmatis (strain ATCC 700084 / mc(2)155) (Mycobacterium smegmatis).